The primary structure comprises 399 residues: Tryptophan synthase beta chain (399 aa).

Position 92 is an N6-(pyridoxal phosphate)lysine (Lys-92).

Belongs to the TrpB family. As to quaternary structure, tetramer of two alpha and two beta chains. The cofactor is pyridoxal 5'-phosphate.

It carries out the reaction (1S,2R)-1-C-(indol-3-yl)glycerol 3-phosphate + L-serine = D-glyceraldehyde 3-phosphate + L-tryptophan + H2O. The protein operates within amino-acid biosynthesis; L-tryptophan biosynthesis; L-tryptophan from chorismate: step 5/5. The beta subunit is responsible for the synthesis of L-tryptophan from indole and L-serine. The protein is Tryptophan synthase beta chain of Legionella pneumophila (strain Paris).